Reading from the N-terminus, the 27-residue chain is Nucleoside diphosphate kinase 2 (27 aa).

ATP is bound at residue K3.

This sequence belongs to the NDK family. It depends on Mg(2+) as a cofactor.

The catalysed reaction is a 2'-deoxyribonucleoside 5'-diphosphate + ATP = a 2'-deoxyribonucleoside 5'-triphosphate + ADP. The enzyme catalyses a ribonucleoside 5'-diphosphate + ATP = a ribonucleoside 5'-triphosphate + ADP. Its function is as follows. Major role in the synthesis of nucleoside triphosphates other than ATP. The ATP gamma phosphate is transferred to the NDP beta phosphate via a ping-pong mechanism, using a phosphorylated active-site intermediate. This chain is Nucleoside diphosphate kinase 2, found in Pseudotsuga menziesii (Douglas-fir).